The primary structure comprises 330 residues: Fructose-1,6-bisphosphatase class 1 (330 aa).

Mg(2+) is bound by residues E84, D103, L105, and D106. Substrate contacts are provided by residues 106-109, N196, and K262; that span reads DGSS. E268 contributes to the Mg(2+) binding site.

Belongs to the FBPase class 1 family. Homotetramer. The cofactor is Mg(2+).

Its subcellular location is the cytoplasm. The enzyme catalyses beta-D-fructose 1,6-bisphosphate + H2O = beta-D-fructose 6-phosphate + phosphate. The protein operates within carbohydrate biosynthesis; gluconeogenesis. In Shewanella baltica (strain OS185), this protein is Fructose-1,6-bisphosphatase class 1.